The chain runs to 245 residues: Type III pantothenate kinase (245 aa).

6-13 (DQGNTILK) serves as a coordination point for ATP. Substrate-binding positions include Tyr86 and 93 to 96 (GTDR). Asp95 (proton acceptor) is an active-site residue. Residue Asp116 coordinates K(+). Thr119 lines the ATP pocket. Thr171 is a binding site for substrate.

This sequence belongs to the type III pantothenate kinase family. As to quaternary structure, homodimer. NH4(+) serves as cofactor. It depends on K(+) as a cofactor.

The protein resides in the cytoplasm. The enzyme catalyses (R)-pantothenate + ATP = (R)-4'-phosphopantothenate + ADP + H(+). It participates in cofactor biosynthesis; coenzyme A biosynthesis; CoA from (R)-pantothenate: step 1/5. In terms of biological role, catalyzes the phosphorylation of pantothenate (Pan), the first step in CoA biosynthesis. This chain is Type III pantothenate kinase, found in Azobacteroides pseudotrichonymphae genomovar. CFP2.